The following is a 339-amino-acid chain: DNA-directed RNA polymerase subunit alpha (339 aa).

The alpha N-terminal domain (alpha-NTD) stretch occupies residues 1-233 (MVREEVAGST…DLFLPFLHAE (233 aa)). The tract at residues 264–339 (KKGIPLNCIF…IDLLKNKLSF (76 aa)) is alpha C-terminal domain (alpha-CTD).

Belongs to the RNA polymerase alpha chain family. In plastids the minimal PEP RNA polymerase catalytic core is composed of four subunits: alpha, beta, beta', and beta''. When a (nuclear-encoded) sigma factor is associated with the core the holoenzyme is formed, which can initiate transcription.

Its subcellular location is the plastid. It is found in the chloroplast. The catalysed reaction is RNA(n) + a ribonucleoside 5'-triphosphate = RNA(n+1) + diphosphate. Functionally, DNA-dependent RNA polymerase catalyzes the transcription of DNA into RNA using the four ribonucleoside triphosphates as substrates. The polypeptide is DNA-directed RNA polymerase subunit alpha (Psathyrostachys stoloniformis).